The sequence spans 171 residues: Large ribosomal subunit protein uL10 (171 aa).

This sequence belongs to the universal ribosomal protein uL10 family. Part of the ribosomal stalk of the 50S ribosomal subunit. The N-terminus interacts with L11 and the large rRNA to form the base of the stalk. The C-terminus forms an elongated spine to which L12 dimers bind in a sequential fashion forming a multimeric L10(L12)X complex.

Forms part of the ribosomal stalk, playing a central role in the interaction of the ribosome with GTP-bound translation factors. This is Large ribosomal subunit protein uL10 from Lactococcus lactis subsp. cremoris (strain SK11).